The sequence spans 410 residues: Heat stress transcription factor A-9 (410 aa).

The segment at 1–44 (MGSKKRSPQHPAAAAPPPAVGGGGGGEVSGDGGASTANGPVVPK) is disordered. Over residues 20–33 (VGGGGGGEVSGDGG) the composition is skewed to gly residues. A coiled-coil region spans residues 171-246 (GLEKEVETLK…QLVQQQQQQR (76 aa)). The segment at 179 to 229 (LKRDKALLMQQLVDLRHYQQTSNLEVQNLIERLQVMEQNQQQMMALLAIVV) is hydrophobic repeat HR-A/B. The Nuclear localization signal signature appears at 256-260 (SKKRR). Residues 279 to 290 (AHIVEYLPPVPE) carry the Nuclear export signal motif.

This sequence belongs to the HSF family. Class A subfamily. Homotrimer. Post-translationally, exhibits temperature-dependent phosphorylation.

It localises to the cytoplasm. The protein localises to the nucleus. In terms of biological role, transcriptional regulator that specifically binds DNA of heat shock promoter elements (HSE). In Oryza sativa subsp. japonica (Rice), this protein is Heat stress transcription factor A-9 (HSFA9).